Here is a 614-residue protein sequence, read N- to C-terminus: Probable LRR receptor-like serine/threonine-protein kinase At5g45780 (614 aa).

An N-terminal signal peptide occupies residues 1-26 (MEISLMKFLFLGIWVYYYSVLDSVSA). Residues 27-242 (MDSLLSPKGV…NSKHHSLVLS (216 aa)) lie on the Extracellular side of the membrane. LRR repeat units lie at residues 104–126 (HLHT…LGQL), 128–151 (ELET…GFLT), 152–174 (HLNY…VAGL), and 176–197 (GLSF…ISAK). 3 N-linked (GlcNAc...) asparagine glycosylation sites follow: Asn-186, Asn-193, and Asn-224. Residues 243–263 (FAFGIVVAFIISLMFLFFWVL) traverse the membrane as a helical segment. At 264 to 614 (WHRSRLSRSH…IEAIELSGPR (351 aa)) the chain is on the cytoplasmic side. A Phosphothreonine modification is found at Thr-297. In terms of domain architecture, Protein kinase spans 300–576 (FSPKNILGQG…QVLKVLEGLV (277 aa)). ATP is bound at residue 306–314 (LGQGGFGMV). Thr-323 carries the post-translational modification Phosphothreonine. Lys-328 contributes to the ATP binding site. Ser-380 bears the Phosphoserine mark. The active-site Proton acceptor is the Asp-426. Phosphothreonine is present on residues Thr-459, Thr-460, and Thr-465. Tyr-473 is modified (phosphotyrosine). Ser-475 is subject to Phosphoserine. The residue at position 476 (Thr-476) is a Phosphothreonine. Ser-480 is subject to Phosphoserine. Thr-555 carries the phosphothreonine modification.

It belongs to the protein kinase superfamily. Ser/Thr protein kinase family.

The protein resides in the membrane. It catalyses the reaction L-seryl-[protein] + ATP = O-phospho-L-seryl-[protein] + ADP + H(+). The enzyme catalyses L-threonyl-[protein] + ATP = O-phospho-L-threonyl-[protein] + ADP + H(+). The sequence is that of Probable LRR receptor-like serine/threonine-protein kinase At5g45780 from Arabidopsis thaliana (Mouse-ear cress).